Consider the following 1037-residue polypeptide: Guanine nucleotide-binding protein G(s) subunit alpha isoforms XLas (1037 aa).

Disordered regions lie at residues 1-105 (MGVR…MPFE), 185-224 (APGG…EETM), 283-588 (SPSQ…TSGC), and 640-666 (PLAE…KKRS). Residues 33-46 (APGAAAPGAGPSPA) are compositionally biased toward low complexity. Basic and acidic residues predominate over residues 343–354 (PDKRERAERPPV). Composition is skewed to low complexity over residues 361–408 (MEGA…GATP) and 416–521 (APAD…PASG). Positions 553–565 (GKSESSRGRRVYY) are enriched in basic and acidic residues. The span at 572–583 (SDDDSSGDESDD) shows a compositional bias: acidic residues. Basic and acidic residues predominate over residues 640 to 660 (PLAEKRRQMRKEALEKRAQKR). A coiled-coil region spans residues 641–667 (LAEKRRQMRKEALEKRAQKRAEKKRSK). Residues 682-1037 (CTHRLLLLGA…RMHLRQYELL (356 aa)) form the G-alpha domain. Residues 685 to 698 (RLLLLGAGESGKST) are G1 motif. 690–698 (GAGESGKST) is a GTP binding site. Ser-697 is a binding site for Mg(2+). Residues 711–734 (FNGEGGEEDPQAARSNSDGEKATK) are disordered. Residues 730–756 (EKATKVQDIKNNLKEAIETIVAAMSNL) are a coiled coil. The segment at 839-847 (DLLRCRVLT) is G2 motif. Residues 840–847 (LLRCRVLT), 866–870 (DVGGQ), and 935–938 (NKQD) each bind GTP. Arg-844 is modified (ADP-ribosylarginine; by cholera toxin). Thr-847 is a Mg(2+) binding site. The segment at 862–871 (FHMFDVGGQR) is G3 motif. Residues 931–938 (ILFLNKQD) form a G4 motif region. Ser-995 carries the phosphoserine modification. A G5 motif region spans residues 1007–1012 (TCAVDT). Ala-1009 provides a ligand contact to GTP.

It belongs to the G-alpha family. G(s) subfamily. In terms of assembly, g proteins are composed of 3 units; alpha, beta and gamma. The alpha chain contains the guanine nucleotide binding site. Interacts through its N-terminal region with ALEX which is produced from the same locus in a different open reading frame. This interaction may inhibit its adenylyl cyclase-stimulating activity. Interacts with MAGED2.

Its subcellular location is the cell membrane. The protein resides in the apical cell membrane. The enzyme catalyses GTP + H2O = GDP + phosphate + H(+). Guanine nucleotide-binding proteins (G proteins) function as transducers in numerous signaling pathways controlled by G protein-coupled receptors (GPCRs). The alpha chain contains the guanine nucleotide binding site and alternates between an active, GTP-bound state and an inactive, GDP-bound state. Signaling by an activated GPCR promotes GDP release and GTP binding. The alpha subunit has a low GTPase activity that converts bound GTP to GDP, thereby terminating the signal. Both GDP release and GTP hydrolysis are modulated by numerous regulatory proteins. Signaling involves the activation of adenylyl cyclases, resulting in increased levels of the signaling molecule cAMP. GNAS functions downstream of several GPCRs, including beta-adrenergic receptors. XLas isoforms interact with the same set of receptors as Gnas isoforms. In Homo sapiens (Human), this protein is Guanine nucleotide-binding protein G(s) subunit alpha isoforms XLas (GNAS).